The primary structure comprises 97 residues: Large ribosomal subunit protein eL21 (97 aa).

A disordered region spans residues 1-26; that stretch reads MQKSEGFRSKTRYKLQKHPRQKGMAP. Over residues 9–21 the composition is skewed to basic residues; it reads SKTRYKLQKHPRQ.

The protein belongs to the eukaryotic ribosomal protein eL21 family.

This is Large ribosomal subunit protein eL21 from Methanococcus maripaludis (strain C6 / ATCC BAA-1332).